Consider the following 421-residue polypeptide: ATP phosphoribosyltransferase regulatory subunit (421 aa).

Belongs to the class-II aminoacyl-tRNA synthetase family. HisZ subfamily. As to quaternary structure, heteromultimer composed of HisG and HisZ subunits.

The protein resides in the cytoplasm. It participates in amino-acid biosynthesis; L-histidine biosynthesis; L-histidine from 5-phospho-alpha-D-ribose 1-diphosphate: step 1/9. Its function is as follows. Required for the first step of histidine biosynthesis. May allow the feedback regulation of ATP phosphoribosyltransferase activity by histidine. In Clostridium novyi (strain NT), this protein is ATP phosphoribosyltransferase regulatory subunit.